A 287-amino-acid polypeptide reads, in one-letter code: Festuclavine synthase II (287 aa).

This sequence belongs to the fgaFS/easG family.

The enzyme catalyses festuclavine + NAD(+) = 6,8-dimethyl-6,7-didehydroergoline + NADH + H(+). It participates in alkaloid biosynthesis; ergot alkaloid biosynthesis. Festuclavine synthase; part of the gene cluster that mediates the biosynthesis of isofumigaclavines, fungal ergot alkaloids. The tryptophan dimethylallyltransferase ifgA catalyzes the first step of ergot alkaloid biosynthesis by condensing dimethylallyl diphosphate (DMAP) and tryptophan to form 4-dimethylallyl-L-tryptophan. The second step is catalyzed by the methyltransferase ifgB that methylates 4-dimethylallyl-L-tryptophan in the presence of S-adenosyl-L-methionine, resulting in the formation of N-methyl-dimethylallyl-L-tryptophan. The catalase ifgD and the FAD-dependent oxidoreductase ifgC then transform N-methyl-dimethylallyl-L-tryptophan to chanoclavine-I which is further oxidized by ifgE in the presence of NAD(+), resulting in the formation of chanoclavine-I aldehyde. The chanoclavine-I aldehyde reductases ifgG and/or fgaOx3 reduce chanoclavine-I aldehyde to dihydrochanoclavine-I aldehyde that spontaneously dehydrates to form 6,8-dimethyl-6,7-didehydroergoline. The festuclavine dehydrogenases ifgF1 and/or ifgF2 then catalyze the reduction of 6,8-dimethyl-6,7-didehydroergoline to form festuclavine. Hydrolysis of festuclavine by a yet undetermined cytochrome P450 monooxygenase (called ifgH) then leads to the formation of isofumigaclavine B which is in turn acetylated by ifgI to isofumigaclavine A. Penicillium roqueforti has interestingly at least two sets of genes for the consumption of chanoclavine-I aldehyde on three different loci, the OYEs ifgG/fgaOx3 and the festuclavine synthase homologs ifgF1/ifgF2. The reason for the duplication of these genes is unclear, probably to ensure the conversion of chanoclavine-I aldehyde by differential gene expression under various environmental conditions. The polypeptide is Festuclavine synthase II (Penicillium roqueforti (strain FM164)).